The sequence spans 209 residues: Thymidylate kinase (209 aa).

An ATP-binding site is contributed by 10 to 17 (GIDGCGKS).

It belongs to the thymidylate kinase family.

It catalyses the reaction dTMP + ATP = dTDP + ADP. Its function is as follows. Phosphorylation of dTMP to form dTDP in both de novo and salvage pathways of dTTP synthesis. This is Thymidylate kinase from Synechococcus sp. (strain CC9902).